Reading from the N-terminus, the 279-residue chain is Biotin synthase (279 aa).

The 231-residue stretch at 2–232 (VRNSRLDICS…NVTIKIAAGR (231 aa)) folds into the Radical SAM core domain. Residues Cys20, Cys24, and Cys27 each contribute to the [4Fe-4S] cluster site. Residues Cys96, Cys156, and Lys227 each coordinate [2Fe-2S] cluster.

It belongs to the radical SAM superfamily. Biotin synthase family. Homodimer. The cofactor is [4Fe-4S] cluster. [2Fe-2S] cluster serves as cofactor.

The catalysed reaction is (4R,5S)-dethiobiotin + (sulfur carrier)-SH + 2 reduced [2Fe-2S]-[ferredoxin] + 2 S-adenosyl-L-methionine = (sulfur carrier)-H + biotin + 2 5'-deoxyadenosine + 2 L-methionine + 2 oxidized [2Fe-2S]-[ferredoxin]. It functions in the pathway cofactor biosynthesis; biotin biosynthesis; biotin from 7,8-diaminononanoate: step 2/2. Its function is as follows. Catalyzes the conversion of dethiobiotin (DTB) to biotin by the insertion of a sulfur atom into dethiobiotin via a radical-based mechanism. The protein is Biotin synthase of Thermotoga neapolitana (strain ATCC 49049 / DSM 4359 / NBRC 107923 / NS-E).